A 485-amino-acid chain; its full sequence is ATP-dependent 6-phosphofructokinase (485 aa).

Residues Gly105, 171-172 (RG), and 196-199 (GDGT) each bind ATP. Asp197 is a Mg(2+) binding site. Substrate contacts are provided by residues 225–227 (TID), 270–272 (MGR), Glu323, and 378–381 (YMIR). Catalysis depends on Asp227, which acts as the Proton acceptor. The Peroxisomal targeting signal motif lies at 483 to 485 (SKL).

This sequence belongs to the phosphofructokinase type A (PFKA) family. PPi-dependent PFK group II subfamily. Atypical ATP-dependent clade 'X' sub-subfamily. Homotetramer. The cofactor is Mg(2+).

The protein localises to the glycosome. The enzyme catalyses beta-D-fructose 6-phosphate + ATP = beta-D-fructose 1,6-bisphosphate + ADP + H(+). It participates in carbohydrate degradation; glycolysis; D-glyceraldehyde 3-phosphate and glycerone phosphate from D-glucose: step 3/4. With respect to regulation, allosterically activated by AMP. Catalyzes the phosphorylation of D-fructose 6-phosphate to fructose 1,6-bisphosphate by ATP, the first committing step of glycolysis. The protein is ATP-dependent 6-phosphofructokinase of Trypanosoma cruzi (strain CL Brener).